We begin with the raw amino-acid sequence, 245 residues long: 1-(5-phosphoribosyl)-5-[(5-phosphoribosylamino)methylideneamino] imidazole-4-carboxamide isomerase (245 aa).

D8 functions as the Proton acceptor in the catalytic mechanism. D129 acts as the Proton donor in catalysis.

It belongs to the HisA/HisF family.

It is found in the cytoplasm. It catalyses the reaction 1-(5-phospho-beta-D-ribosyl)-5-[(5-phospho-beta-D-ribosylamino)methylideneamino]imidazole-4-carboxamide = 5-[(5-phospho-1-deoxy-D-ribulos-1-ylimino)methylamino]-1-(5-phospho-beta-D-ribosyl)imidazole-4-carboxamide. The protein operates within amino-acid biosynthesis; L-histidine biosynthesis; L-histidine from 5-phospho-alpha-D-ribose 1-diphosphate: step 4/9. This is 1-(5-phosphoribosyl)-5-[(5-phosphoribosylamino)methylideneamino] imidazole-4-carboxamide isomerase from Rhodopseudomonas palustris (strain ATCC BAA-98 / CGA009).